The following is a 189-amino-acid chain: Thymidine kinase (189 aa).

ATP-binding positions include 9–16 (GTMNSGKT) and 85–88 (DESQ). Residue Glu86 is the Proton acceptor of the active site. The Zn(2+) site is built by Cys143, Cys146, Cys180, and His183.

Belongs to the thymidine kinase family. In terms of assembly, homotetramer.

The protein localises to the cytoplasm. It catalyses the reaction thymidine + ATP = dTMP + ADP + H(+). The polypeptide is Thymidine kinase (Streptococcus pyogenes serotype M18 (strain MGAS8232)).